Here is a 360-residue protein sequence, read N- to C-terminus: Geranylgeranyl pyrophosphate synthase 3, chloroplastic (360 aa).

A chloroplast-targeting transit peptide spans 1 to 39 (MATTVHLSSFSLFIQSRGRRDNSISSVKSLKKRTGLSPS). The segment at 24–54 (ISSVKSLKKRTGLSPSSALTSQGGRDMIPPE) is disordered. The segment covering 36 to 46 (LSPSSALTSQG) has biased composition (polar residues). Isopentenyl diphosphate-binding residues include K106, R109, and H138. 2 residues coordinate Mg(2+): D145 and D151. R156 is a binding site for dimethylallyl diphosphate. Residue R157 coordinates isopentenyl diphosphate. Dimethylallyl diphosphate-binding residues include K245, T246, Q283, K300, and K310.

This sequence belongs to the FPP/GGPP synthase family. As to quaternary structure, monomer. Requires Mg(2+) as cofactor. As to expression, mainly expressed in roots.

It is found in the plastid. It localises to the chloroplast. It carries out the reaction isopentenyl diphosphate + dimethylallyl diphosphate = (2E)-geranyl diphosphate + diphosphate. It catalyses the reaction isopentenyl diphosphate + (2E)-geranyl diphosphate = (2E,6E)-farnesyl diphosphate + diphosphate. The catalysed reaction is isopentenyl diphosphate + (2E,6E)-farnesyl diphosphate = (2E,6E,10E)-geranylgeranyl diphosphate + diphosphate. Its pathway is isoprenoid biosynthesis; farnesyl diphosphate biosynthesis; farnesyl diphosphate from geranyl diphosphate and isopentenyl diphosphate: step 1/1. It participates in isoprenoid biosynthesis; geranyl diphosphate biosynthesis; geranyl diphosphate from dimethylallyl diphosphate and isopentenyl diphosphate: step 1/1. The protein operates within isoprenoid biosynthesis; geranylgeranyl diphosphate biosynthesis; geranylgeranyl diphosphate from farnesyl diphosphate and isopentenyl diphosphate: step 1/1. Functionally, catalyzes the trans-addition of the three molecules of IPP onto DMAPP to form geranylgeranyl pyrophosphate. This is Geranylgeranyl pyrophosphate synthase 3, chloroplastic (GGPP3) from Arabidopsis thaliana (Mouse-ear cress).